Reading from the N-terminus, the 373-residue chain is Lipoyl synthase, mitochondrial (373 aa).

Residues 1 to 26 (MALRCWDAARSLGSRIFGRYACSVRA) constitute a mitochondrion transit peptide. [4Fe-4S] cluster-binding residues include Cys105, Cys110, Cys116, Cys136, Cys140, Cys143, and Ser351. The region spanning 121-340 (EYATATATIM…EEVGNELGFH (220 aa)) is the Radical SAM core domain.

It belongs to the radical SAM superfamily. Lipoyl synthase family. [4Fe-4S] cluster is required as a cofactor.

The protein localises to the mitochondrion. It catalyses the reaction [[Fe-S] cluster scaffold protein carrying a second [4Fe-4S](2+) cluster] + N(6)-octanoyl-L-lysyl-[protein] + 2 oxidized [2Fe-2S]-[ferredoxin] + 2 S-adenosyl-L-methionine + 4 H(+) = [[Fe-S] cluster scaffold protein] + N(6)-[(R)-dihydrolipoyl]-L-lysyl-[protein] + 4 Fe(3+) + 2 hydrogen sulfide + 2 5'-deoxyadenosine + 2 L-methionine + 2 reduced [2Fe-2S]-[ferredoxin]. It functions in the pathway protein modification; protein lipoylation via endogenous pathway; protein N(6)-(lipoyl)lysine from octanoyl-[acyl-carrier-protein]: step 2/2. Catalyzes the radical-mediated insertion of two sulfur atoms into the C-6 and C-8 positions of the octanoyl moiety bound to the lipoyl domains of lipoate-dependent enzymes, thereby converting the octanoylated domains into lipoylated derivatives. This Rattus norvegicus (Rat) protein is Lipoyl synthase, mitochondrial (Lias).